A 353-amino-acid polypeptide reads, in one-letter code: S-adenosylmethionine:tRNA ribosyltransferase-isomerase (353 aa).

The protein belongs to the QueA family. Monomer.

It localises to the cytoplasm. It carries out the reaction 7-aminomethyl-7-carbaguanosine(34) in tRNA + S-adenosyl-L-methionine = epoxyqueuosine(34) in tRNA + adenine + L-methionine + 2 H(+). It participates in tRNA modification; tRNA-queuosine biosynthesis. Its function is as follows. Transfers and isomerizes the ribose moiety from AdoMet to the 7-aminomethyl group of 7-deazaguanine (preQ1-tRNA) to give epoxyqueuosine (oQ-tRNA). In Cupriavidus metallidurans (strain ATCC 43123 / DSM 2839 / NBRC 102507 / CH34) (Ralstonia metallidurans), this protein is S-adenosylmethionine:tRNA ribosyltransferase-isomerase.